The chain runs to 302 residues: Cobalt-precorrin-6A reductase (302 aa).

A compositionally biased stretch (basic and acidic residues) spans 1-10 (MQTPEIKEGT). The disordered stretch occupies residues 1–37 (MQTPEIKEGTEQYLWRRKTMNPGDKGVKRKGSDRQRE).

The protein belongs to the precorrin-6x reductase family.

It carries out the reaction Co-precorrin-6B + NAD(+) = Co-precorrin-6A + NADH + H(+). It participates in cofactor biosynthesis; adenosylcobalamin biosynthesis; cob(II)yrinate a,c-diamide from sirohydrochlorin (anaerobic route): step 7/10. Catalyzes the reduction of the macrocycle of cobalt-precorrin-6A to cobalt-precorrin-6B. The sequence is that of Cobalt-precorrin-6A reductase (cbiJ) from Methanothermobacter thermautotrophicus (strain ATCC 29096 / DSM 1053 / JCM 10044 / NBRC 100330 / Delta H) (Methanobacterium thermoautotrophicum).